We begin with the raw amino-acid sequence, 270 residues long: Undecaprenyl-diphosphatase (270 aa).

Helical transmembrane passes span 1–21 (MTWW…FIPV), 92–112 (FRLG…YVLF), 119–139 (AFGS…LLLL), 150–170 (LSGV…VPGI), 193–213 (FSFL…GLEL), 223–243 (LSLG…IYVV), and 250–270 (GNLQ…LWLL).

This sequence belongs to the UppP family.

Its subcellular location is the cell inner membrane. The enzyme catalyses di-trans,octa-cis-undecaprenyl diphosphate + H2O = di-trans,octa-cis-undecaprenyl phosphate + phosphate + H(+). In terms of biological role, catalyzes the dephosphorylation of undecaprenyl diphosphate (UPP). Confers resistance to bacitracin. The sequence is that of Undecaprenyl-diphosphatase from Salinibacter ruber (strain DSM 13855 / M31).